Here is a 355-residue protein sequence, read N- to C-terminus: 3-isopropylmalate dehydrogenase (355 aa).

The substrate site is built by Arg90, Arg100, Arg128, and Asp222. 3 residues coordinate Mg(2+): Asp222, Asp246, and Asp250. Residue 280-292 (GSAPDIAGKGIAN) participates in NAD(+) binding.

This sequence belongs to the isocitrate and isopropylmalate dehydrogenases family. LeuB type 1 subfamily. Homodimer. The cofactor is Mg(2+). It depends on Mn(2+) as a cofactor.

It localises to the cytoplasm. It catalyses the reaction (2R,3S)-3-isopropylmalate + NAD(+) = 4-methyl-2-oxopentanoate + CO2 + NADH. It functions in the pathway amino-acid biosynthesis; L-leucine biosynthesis; L-leucine from 3-methyl-2-oxobutanoate: step 3/4. Its function is as follows. Catalyzes the oxidation of 3-carboxy-2-hydroxy-4-methylpentanoate (3-isopropylmalate) to 3-carboxy-4-methyl-2-oxopentanoate. The product decarboxylates to 4-methyl-2 oxopentanoate. In Burkholderia mallei (strain ATCC 23344), this protein is 3-isopropylmalate dehydrogenase.